A 145-amino-acid chain; its full sequence is MASLSMASVNVSFCHPLRSSSPKVSLRSSVHFATSLSSSHSISGLRAVLPLKISTVASPNSQKLHSFTVFAHKGYKMKTHKASAKRFRVTGRGKIVRRRSGKQHLLAKKNNKRKLRLSKMTEVNRSDYDNVIGALPYLKVNRKAT.

Residues 1–56 (MASLSMASVNVSFCHPLRSSSPKVSLRSSVHFATSLSSSHSISGLRAVLPLKISTV) constitute a chloroplast transit peptide.

The protein belongs to the bacterial ribosomal protein bL35 family. In terms of assembly, part of the 50S ribosomal subunit.

The protein localises to the plastid. The protein resides in the chloroplast. The polypeptide is Large ribosomal subunit protein bL35c (Arabidopsis thaliana (Mouse-ear cress)).